The following is a 472-amino-acid chain: Adenylyl cyclase-associated protein 1 (472 aa).

A2 carries the N-acetylalanine modification. Y31 carries the phosphotyrosine modification. Residue S34 is modified to Phosphoserine. Residue K81 is modified to N6-acetyllysine. Residues E216–S253 are disordered. Positions S218–S228 are enriched in low complexity. Positions G229–P243 are enriched in pro residues. A compositionally biased stretch (low complexity) spans T244–S253. K287 is subject to N6-methyllysine. S290, S295, and S301 each carry phosphoserine. A disordered region spans residues S290–A312. Positions P307 to V450 constitute a C-CAP/cofactor C-like domain. A Glycyl lysine isopeptide (Lys-Gly) (interchain with G-Cter in SUMO1) cross-link involves residue K345.

This sequence belongs to the CAP family. In terms of assembly, homodimer. Binds actin monomers.

Its subcellular location is the cell membrane. Its function is as follows. Directly regulates filament dynamics and has been implicated in a number of complex developmental and morphological processes, including mRNA localization and the establishment of cell polarity. The protein is Adenylyl cyclase-associated protein 1 (CAP1) of Bos taurus (Bovine).